Consider the following 520-residue polypeptide: tRNA-2-methylthio-N(6)-dimethylallyladenosine synthase (520 aa).

The MTTase N-terminal domain occupies 77–195 (KKFLIRTYGC…LPHLLRDAIF (119 aa)). [4Fe-4S] cluster-binding residues include cysteine 86, cysteine 122, cysteine 156, cysteine 232, cysteine 236, and cysteine 239. The Radical SAM core domain occupies 218–448 (RKNKTQAWVN…ALVNDISNKR (231 aa)). One can recognise a TRAM domain in the interval 450–513 (LDYQDKIVEV…TWSLDGEIVS (64 aa)).

The protein belongs to the methylthiotransferase family. MiaB subfamily. Monomer. Requires [4Fe-4S] cluster as cofactor.

The protein localises to the cytoplasm. The catalysed reaction is N(6)-dimethylallyladenosine(37) in tRNA + (sulfur carrier)-SH + AH2 + 2 S-adenosyl-L-methionine = 2-methylsulfanyl-N(6)-dimethylallyladenosine(37) in tRNA + (sulfur carrier)-H + 5'-deoxyadenosine + L-methionine + A + S-adenosyl-L-homocysteine + 2 H(+). Its function is as follows. Catalyzes the methylthiolation of N6-(dimethylallyl)adenosine (i(6)A), leading to the formation of 2-methylthio-N6-(dimethylallyl)adenosine (ms(2)i(6)A) at position 37 in tRNAs that read codons beginning with uridine. In Shouchella clausii (strain KSM-K16) (Alkalihalobacillus clausii), this protein is tRNA-2-methylthio-N(6)-dimethylallyladenosine synthase.